We begin with the raw amino-acid sequence, 298 residues long: N-acetylmuramic acid 6-phosphate etherase (298 aa).

An SIS domain is found at 55–218; the sequence is IHAQVSGGGR…STGLMIKSGK (164 aa). Catalysis depends on glutamate 83, which acts as the Proton donor. The active site involves glutamate 114.

The protein belongs to the GCKR-like family. MurNAc-6-P etherase subfamily. Homodimer.

It catalyses the reaction N-acetyl-D-muramate 6-phosphate + H2O = N-acetyl-D-glucosamine 6-phosphate + (R)-lactate. It participates in amino-sugar metabolism; 1,6-anhydro-N-acetylmuramate degradation. The protein operates within amino-sugar metabolism; N-acetylmuramate degradation. Its pathway is cell wall biogenesis; peptidoglycan recycling. Its function is as follows. Specifically catalyzes the cleavage of the D-lactyl ether substituent of MurNAc 6-phosphate, producing GlcNAc 6-phosphate and D-lactate. Together with AnmK, is also required for the utilization of anhydro-N-acetylmuramic acid (anhMurNAc) either imported from the medium or derived from its own cell wall murein, and thus plays a role in cell wall recycling. In Escherichia coli O81 (strain ED1a), this protein is N-acetylmuramic acid 6-phosphate etherase.